Consider the following 267-residue polypeptide: Acyl-[acyl-carrier-protein]--UDP-N-acetylglucosamine O-acyltransferase (267 aa).

The protein belongs to the transferase hexapeptide repeat family. LpxA subfamily. Homotrimer.

It is found in the cytoplasm. It carries out the reaction a (3R)-hydroxyacyl-[ACP] + UDP-N-acetyl-alpha-D-glucosamine = a UDP-3-O-[(3R)-3-hydroxyacyl]-N-acetyl-alpha-D-glucosamine + holo-[ACP]. Its pathway is glycolipid biosynthesis; lipid IV(A) biosynthesis; lipid IV(A) from (3R)-3-hydroxytetradecanoyl-[acyl-carrier-protein] and UDP-N-acetyl-alpha-D-glucosamine: step 1/6. In terms of biological role, involved in the biosynthesis of lipid A, a phosphorylated glycolipid that anchors the lipopolysaccharide to the outer membrane of the cell. In Proteus mirabilis (strain HI4320), this protein is Acyl-[acyl-carrier-protein]--UDP-N-acetylglucosamine O-acyltransferase.